We begin with the raw amino-acid sequence, 186 residues long: Elongation factor P (186 aa).

The protein belongs to the elongation factor P family.

The protein localises to the cytoplasm. It participates in protein biosynthesis; polypeptide chain elongation. Its function is as follows. Involved in peptide bond synthesis. Stimulates efficient translation and peptide-bond synthesis on native or reconstituted 70S ribosomes in vitro. Probably functions indirectly by altering the affinity of the ribosome for aminoacyl-tRNA, thus increasing their reactivity as acceptors for peptidyl transferase. The protein is Elongation factor P of Shewanella baltica (strain OS223).